Reading from the N-terminus, the 635-residue chain is Threonine--tRNA ligase (635 aa).

Positions 1–61 (MTVVRLPDGT…ETDSDLVLIT (61 aa)) constitute a TGS domain. Residues 242–533 (DHRKLGKQLD…LIEHHAGALP (292 aa)) form a catalytic region. C333, H384, and H510 together coordinate Zn(2+).

This sequence belongs to the class-II aminoacyl-tRNA synthetase family. In terms of assembly, homodimer. Zn(2+) is required as a cofactor.

It is found in the cytoplasm. The catalysed reaction is tRNA(Thr) + L-threonine + ATP = L-threonyl-tRNA(Thr) + AMP + diphosphate + H(+). Functionally, catalyzes the attachment of threonine to tRNA(Thr) in a two-step reaction: L-threonine is first activated by ATP to form Thr-AMP and then transferred to the acceptor end of tRNA(Thr). Also edits incorrectly charged L-seryl-tRNA(Thr). The chain is Threonine--tRNA ligase from Nitrosomonas europaea (strain ATCC 19718 / CIP 103999 / KCTC 2705 / NBRC 14298).